Here is a 407-residue protein sequence, read N- to C-terminus: Acetate kinase (407 aa).

Mg(2+) is bound at residue Asn10. ATP is bound at residue Lys17. Arg91 serves as a coordination point for substrate. The active-site Proton donor/acceptor is the Asp150. ATP-binding positions include 210–214, 285–287, and 338–342; these read HLGNG, DCR, and GIGEN. Residue Glu392 coordinates Mg(2+).

It belongs to the acetokinase family. As to quaternary structure, homodimer. Requires Mg(2+) as cofactor. Mn(2+) serves as cofactor.

The protein resides in the cytoplasm. The enzyme catalyses acetate + ATP = acetyl phosphate + ADP. The protein operates within metabolic intermediate biosynthesis; acetyl-CoA biosynthesis; acetyl-CoA from acetate: step 1/2. Its function is as follows. Catalyzes the formation of acetyl phosphate from acetate and ATP. Can also catalyze the reverse reaction. This Mannheimia succiniciproducens (strain KCTC 0769BP / MBEL55E) protein is Acetate kinase.